The following is a 447-amino-acid chain: N-succinylarginine dihydrolase (447 aa).

Residues 19–28 (AGLSFGNEAS), Asn110, and 137–138 (HR) each bind substrate. Glu174 is an active-site residue. Arg212 contributes to the substrate binding site. Residue His248 is part of the active site. Residues Asp250 and Asn359 each contribute to the substrate site. Cys365 functions as the Nucleophile in the catalytic mechanism.

It belongs to the succinylarginine dihydrolase family. As to quaternary structure, homodimer.

It catalyses the reaction N(2)-succinyl-L-arginine + 2 H2O + 2 H(+) = N(2)-succinyl-L-ornithine + 2 NH4(+) + CO2. It functions in the pathway amino-acid degradation; L-arginine degradation via AST pathway; L-glutamate and succinate from L-arginine: step 2/5. In terms of biological role, catalyzes the hydrolysis of N(2)-succinylarginine into N(2)-succinylornithine, ammonia and CO(2). The sequence is that of N-succinylarginine dihydrolase from Salmonella enteritidis PT4 (strain P125109).